Consider the following 60-residue polypeptide: Large ribosomal subunit protein uL30 (60 aa).

It belongs to the universal ribosomal protein uL30 family. As to quaternary structure, part of the 50S ribosomal subunit.

This is Large ribosomal subunit protein uL30 from Cupriavidus necator (strain ATCC 17699 / DSM 428 / KCTC 22496 / NCIMB 10442 / H16 / Stanier 337) (Ralstonia eutropha).